Consider the following 243-residue polypeptide: MEQKILTTIHQQILEAKKNGQKLLAILLDPDKIVWENLDHLLLKINQSPATHIFVGGSIVESTIIEDLIAQLKQKTRLPVVIFPGDPSQISPKADAILFLSLLSGRNPDYLIEYQVQAAPILKKTNLEVISTGYILIESGNETAVARVSKTEPLNRENFDLALATAQAGEMLGSKLIYLEAGSGAKKPVPLEMISVISQNVEIPIIVGGGIVDLHGIKKAYNAGADLVVIGTAFENDSHFFDS.

Mg(2+)-binding residues include Asp-29 and Ser-58. Sn-glycerol 1-phosphate contacts are provided by residues 178 to 184, 209 to 210, and 231 to 232; these read YLEAGSG, GG, and GT.

Belongs to the GGGP/HepGP synthase family. Group II subfamily. In terms of assembly, homodimer. Mg(2+) serves as cofactor.

The enzyme catalyses sn-glycerol 1-phosphate + (2E,6E,10E)-geranylgeranyl diphosphate = sn-3-O-(geranylgeranyl)glycerol 1-phosphate + diphosphate. Functionally, prenyltransferase that catalyzes the transfer of the geranylgeranyl moiety of geranylgeranyl diphosphate (GGPP) to the C3 hydroxyl of sn-glycerol-1-phosphate (G1P). The polypeptide is Geranylgeranylglyceryl phosphate synthase (Flavobacterium johnsoniae (strain ATCC 17061 / DSM 2064 / JCM 8514 / BCRC 14874 / CCUG 350202 / NBRC 14942 / NCIMB 11054 / UW101) (Cytophaga johnsonae)).